A 134-amino-acid polypeptide reads, in one-letter code: 4-carboxymuconolactone decarboxylase (134 aa).

This sequence belongs to the carboxymuconolactone decarboxylase family.

It carries out the reaction (R)-2-(carboxymethyl)-5-oxo-2,5-dihydro-2-furoate + H(+) = (4,5-dihydro-5-oxofuran-2-yl)-acetate + CO2. It participates in aromatic compound metabolism; beta-ketoadipate pathway; 5-oxo-4,5-dihydro-2-furylacetate from 3-carboxy-cis,cis-muconate: step 2/2. In Acinetobacter baylyi (strain ATCC 33305 / BD413 / ADP1), this protein is 4-carboxymuconolactone decarboxylase (pcaC).